The chain runs to 288 residues: Light-independent protochlorophyllide reductase iron-sulfur ATP-binding protein (288 aa).

ATP is bound by residues Gly-10 to Thr-15 and Lys-39. Ser-14 contacts Mg(2+). [4Fe-4S] cluster is bound by residues Cys-95 and Cys-129. An ATP-binding site is contributed by Asn-180–Arg-181.

The protein belongs to the NifH/BchL/ChlL family. Homodimer. Protochlorophyllide reductase is composed of three subunits; ChlL, ChlN and ChlB. [4Fe-4S] cluster serves as cofactor.

It is found in the plastid. The protein resides in the chloroplast. It carries out the reaction chlorophyllide a + oxidized 2[4Fe-4S]-[ferredoxin] + 2 ADP + 2 phosphate = protochlorophyllide a + reduced 2[4Fe-4S]-[ferredoxin] + 2 ATP + 2 H2O. It participates in porphyrin-containing compound metabolism; chlorophyll biosynthesis (light-independent). In terms of biological role, component of the dark-operative protochlorophyllide reductase (DPOR) that uses Mg-ATP and reduced ferredoxin to reduce ring D of protochlorophyllide (Pchlide) to form chlorophyllide a (Chlide). This reaction is light-independent. The L component serves as a unique electron donor to the NB-component of the complex, and binds Mg-ATP. The polypeptide is Light-independent protochlorophyllide reductase iron-sulfur ATP-binding protein (Chara vulgaris (Common stonewort)).